Reading from the N-terminus, the 176-residue chain is Large ribosomal subunit protein uL6 (176 aa).

The segment covering 151 to 170 (RPPEPYKGKGVRYADEQVRR) has biased composition (basic and acidic residues). Positions 151–176 (RPPEPYKGKGVRYADEQVRRKEAKKK) are disordered.

Belongs to the universal ribosomal protein uL6 family. Part of the 50S ribosomal subunit.

Its function is as follows. This protein binds to the 23S rRNA, and is important in its secondary structure. It is located near the subunit interface in the base of the L7/L12 stalk, and near the tRNA binding site of the peptidyltransferase center. In Shewanella loihica (strain ATCC BAA-1088 / PV-4), this protein is Large ribosomal subunit protein uL6.